Reading from the N-terminus, the 646-residue chain is Envelope glycoprotein (646 aa).

Positions 1 to 25 are cleaved as a signal peptide; that stretch reads MLSVAQSSALFLLQAICILYITKLT. Residues 26 to 119 are Lumenal-facing; the sequence is IPTPVSEINL…INYLLRFISA (94 aa). N-linked (GlcNAc...) asparagine; by host glycans are attached at residues Asn-72, Asn-80, and Asn-101. Residues 120–140 form a helical membrane-spanning segment; the sequence is IIVYLLLSISKQGIFLFFSIV. Over 141–176 the chain is Cytoplasmic; sequence HYSFKFIKNKKSCNICGNDFYFIHIDCPKPDFTKRS. Residues 177-197 traverse the membrane as a helical segment; it reads DFHMMFYIILFLSLFFVVTHA. Residues 198–588 are Lumenal-facing; that stretch reads DDNVYNYYEH…KNLLYIDYKK (391 aa). Residues Asn-247 and Asn-336 are each glycosylated (N-linked (GlcNAc...) asparagine; by host). Residues 589–609 traverse the membrane as a helical segment; sequence IIFVFLVAIISIGIFLRSPYM. The Cytoplasmic segment spans residues 610–646; sequence LLSSILKFRKRRKVVATNRSEQLVMDDDVDVFIGPPS.

In terms of assembly, G2 and G1 interact with each other. In terms of processing, specific enzymatic cleavages in vivo yield mature proteins including glycoprotein G1 and glycoprotein G2. Post-translationally, glycosylated. Glycosylation is essential for proper subcellular location.

It is found in the virion membrane. It localises to the host Golgi apparatus membrane. Glycoprotein G2 and glycoprotein G1 interact with each other and are present at the surface of the virion. They are able to attach the virion to a cell receptor and to promote fusion of membranes after endocytosis of the virion. This European mountain ash ringspot-associated virus (isolate Sorbus aucuparia) (EMARAV) protein is Envelope glycoprotein.